A 357-amino-acid polypeptide reads, in one-letter code: UDP-N-acetylglucosamine--N-acetylmuramyl-(pentapeptide) pyrophosphoryl-undecaprenol N-acetylglucosamine transferase (357 aa).

UDP-N-acetyl-alpha-D-glucosamine is bound by residues 12 to 14, Asn-124, Arg-163, Ser-189, Ile-243, 262 to 267, and Gln-288; these read TGG and ALTVSE.

Belongs to the glycosyltransferase 28 family. MurG subfamily.

The protein localises to the cell inner membrane. The catalysed reaction is di-trans,octa-cis-undecaprenyl diphospho-N-acetyl-alpha-D-muramoyl-L-alanyl-D-glutamyl-meso-2,6-diaminopimeloyl-D-alanyl-D-alanine + UDP-N-acetyl-alpha-D-glucosamine = di-trans,octa-cis-undecaprenyl diphospho-[N-acetyl-alpha-D-glucosaminyl-(1-&gt;4)]-N-acetyl-alpha-D-muramoyl-L-alanyl-D-glutamyl-meso-2,6-diaminopimeloyl-D-alanyl-D-alanine + UDP + H(+). It functions in the pathway cell wall biogenesis; peptidoglycan biosynthesis. Its function is as follows. Cell wall formation. Catalyzes the transfer of a GlcNAc subunit on undecaprenyl-pyrophosphoryl-MurNAc-pentapeptide (lipid intermediate I) to form undecaprenyl-pyrophosphoryl-MurNAc-(pentapeptide)GlcNAc (lipid intermediate II). This is UDP-N-acetylglucosamine--N-acetylmuramyl-(pentapeptide) pyrophosphoryl-undecaprenol N-acetylglucosamine transferase from Pseudomonas paraeruginosa (strain DSM 24068 / PA7) (Pseudomonas aeruginosa (strain PA7)).